The sequence spans 89 residues: UPF0223 protein BCA_4066 (89 aa).

The protein belongs to the UPF0223 family.

This is UPF0223 protein BCA_4066 from Bacillus cereus (strain 03BB102).